The chain runs to 367 residues: uncharacterized protein (367 aa).

It localises to the mitochondrion. This is an uncharacterized protein from Paramecium tetraurelia.